Here is a 550-residue protein sequence, read N- to C-terminus: MAELTISTEEIRGALERYVSSYSADVSREEVGTVADAGDGIAHVEGLPSTMTNELLEFEDGTIGVALNLDVREIGVVVLGDFAGIEEGQRVKRTGRVLSAPVGDAFLGRVVNALGEPIDGLGDIPNEGFRELELQAPNVMSRKSVDEPLQTGIKAIDAMTPIGRGQRQLIIGDRKTGKTTVALDTILNQRDNWRSGDPKKQVRCIYVAVGQKASTIASIKGVLEEAGAMEYTTIVASPASDPAGFKYLAPYTGSSIGQHWMYGGKHVLIVFDDLSKQAEAYRAVSLLLRRPPGREAYPGDVFYLHSRLLERCAKLSDEMGGGSMTGLPIIETKANDISAFIPTNVISITDGQIFLETDLFNQGVRPAINVGTSVSRVGGSAQVKPMKKVSGSLRLNLAQYRELEAFAAFASDLDKASRAQLERGSRLVELLKQPNYTPFPVQDQVVLVWAGVEGKLDDIPVGEIGRFESEFLQYLRHKHEGVLAQIAGGTWGDEVIASLDAAISDFKKLFLGKEDELRINEPAAEPLAGEEDRETVTRFHDDATDRPAGS.

Gly172 to Thr179 is a binding site for ATP. Positions Glu521–Ser550 are disordered. Positions Glu534–Ser550 are enriched in basic and acidic residues.

This sequence belongs to the ATPase alpha/beta chains family. F-type ATPases have 2 components, CF(1) - the catalytic core - and CF(0) - the membrane proton channel. CF(1) has five subunits: alpha(3), beta(3), gamma(1), delta(1), epsilon(1). CF(0) has three main subunits: a(1), b(2) and c(9-12). The alpha and beta chains form an alternating ring which encloses part of the gamma chain. CF(1) is attached to CF(0) by a central stalk formed by the gamma and epsilon chains, while a peripheral stalk is formed by the delta and b chains.

The protein resides in the cell membrane. The catalysed reaction is ATP + H2O + 4 H(+)(in) = ADP + phosphate + 5 H(+)(out). Produces ATP from ADP in the presence of a proton gradient across the membrane. The alpha chain is a regulatory subunit. The polypeptide is ATP synthase subunit alpha (Salinispora tropica (strain ATCC BAA-916 / DSM 44818 / JCM 13857 / NBRC 105044 / CNB-440)).